Here is a 678-residue protein sequence, read N- to C-terminus: MAAHHRQNTAGRRKVQVSYVIRDEVEKYNRNGVNALQLDPALNRLFTAGRDSIIRIWNVNQHKQDPYIASMEHHTDWVNDIVLCCNGKTLISASSDTTVKVWNAHKGFCMSTLRTHKDYVKALAYAKDKELVASAGLDRQIFLWDVNTLTALTASNNTVTTSSLSGNKDSIYSLAMNQMGTVIVSGSTEKVLRVWDPRTCQKLMKLKGHTDNVKALLLNRDGTQCLSGSSDGTIRLWSLGQQRCIATYRVHDEGVWALQVNEGFTHVYSGGRDRKIYCTDLRNPDIRLLICEEKAPVLKMELDRSADPPLALWVATTKSSVNKWPIKGILNFRSSGDYENDCSTPLSPICSQPDQVIKGGASIIQCNILNDKRHILTKDTNNNVAYWDVLKACKVEDLGKVDFEEEIKKRFKMVYVPNWFSVDLKTGMLTITLDESDCFAAWVSAKDAGFSSPDGSDPKLNLGGLLLQALLEFWPRTHINPMEEEENEVNHVANGEQENRIQKGNGYFQVPPHTPVIFGEAGGRTLFRLLCRDSGGETESMLLNETVPQWVIDITVDKNMPKFNKIPFYLQPHSSSGAKTLKKDRLSASDMLQVRKVMEHVYEKIINVDTESQTTSSSNNEKPGEQEKEEDIAVLAEEKIELLCQDQILDPNMDLRTVKHFIWKSGGDLTLHYRQKST.

8 WD repeats span residues 28–67, 73–112, 115–154, 166–205, 208–247, 250–289, 292–334, and 358–397; these read YNRNGVNALQLDPALNRLFTAGRDSIIRIWNVNQHKQDPY, HHTDWVNDIVLCCNGKTLISASSDTTVKVWNAHKGFCMST, THKDYVKALAYAKDKELVASAGLDRQIFLWDVNTLTALTA, GNKDSIYSLAMNQMGTVIVSGSTEKVLRVWDPRTCQKLMK, GHTDNVKALLLNRDGTQCLSGSSDGTIRLWSLGQQRCIAT, VHDEGVWALQVNEGFTHVYSGGRDRKIYCTDLRNPDIRLL, EEKA…NFRS, and KGGASIIQCNILNDKRHILTKDTNNNVAYWDVLKACKVED. Residues 608 to 629 form a disordered region; that stretch reads VDTESQTTSSSNNEKPGEQEKE. The span at 610–621 shows a compositional bias: low complexity; it reads TESQTTSSSNNE.

Belongs to the WD repeat WDR48 family.

The protein localises to the nucleus. The protein resides in the cytoplasm. It localises to the lysosome. It is found in the late endosome. Its function is as follows. Regulator of deubiquitinating complexes, which acts as a strong activator of usp1, usp12 and usp46. Enhances the usp1-mediated deubiquitination of fancd2; usp1 being almost inactive by itself. Activates deubiquitination by increasing the catalytic turnover without increasing the affinity of deubiquitinating enzymes for the substrate. Also activates deubiquitinating activity of complexes containing usp12. Together with rad51ap1, promotes DNA repair by stimulating rad51-mediated homologous recombination. Binds single-stranded DNA (ssDNA) and double-stranded DNA (dsDNA). DNA-binding is required both for usp1-mediated deubiquitination of fancd2 and stimulation of rad51-mediated homologous recombination: both wdr48/uaf1 and rad51ap1 have coordinated role in DNA-binding during these processes. Together with atad5 and by regulating usp1 activity, has a role in pcna-mediated translesion synthesis (TLS) by deubiquitinating monoubiquitinated pcna. Together with atad5, has a role in recruiting rad51 to stalled forks during replication stress. The protein is WD repeat-containing protein 48 (wdr48) of Xenopus tropicalis (Western clawed frog).